Here is a 99-residue protein sequence, read N- to C-terminus: Putative pterin-4-alpha-carbinolamine dehydratase (99 aa).

This sequence belongs to the pterin-4-alpha-carbinolamine dehydratase family.

It catalyses the reaction (4aS,6R)-4a-hydroxy-L-erythro-5,6,7,8-tetrahydrobiopterin = (6R)-L-erythro-6,7-dihydrobiopterin + H2O. The chain is Putative pterin-4-alpha-carbinolamine dehydratase from Aquifex aeolicus (strain VF5).